The following is a 97-amino-acid chain: Large ribosomal subunit protein uL23 (97 aa).

This sequence belongs to the universal ribosomal protein uL23 family. In terms of assembly, part of the 50S ribosomal subunit. Contacts protein L29, and trigger factor when it is bound to the ribosome.

One of the early assembly proteins it binds 23S rRNA. One of the proteins that surrounds the polypeptide exit tunnel on the outside of the ribosome. Forms the main docking site for trigger factor binding to the ribosome. The protein is Large ribosomal subunit protein uL23 of Bartonella henselae (strain ATCC 49882 / DSM 28221 / CCUG 30454 / Houston 1) (Rochalimaea henselae).